We begin with the raw amino-acid sequence, 78 residues long: Large ribosomal subunit protein bL28 (78 aa).

The interval M1–N23 is disordered.

The protein belongs to the bacterial ribosomal protein bL28 family.

In Shewanella frigidimarina (strain NCIMB 400), this protein is Large ribosomal subunit protein bL28.